The sequence spans 189 residues: Phosphoheptose isomerase (189 aa).

The 157-residue stretch at 33 to 189 (CTDTLKAGNK…ELVEREIYGG (157 aa)) folds into the SIS domain. 48–50 (NGG) is a binding site for substrate. Zn(2+)-binding residues include His57 and Glu61. Residues Glu61, 90-91 (ND), 116-118 (STS), Ser121, and Gln168 each bind substrate. Zn(2+) is bound by residues Gln168 and His176.

This sequence belongs to the SIS family. GmhA subfamily. Zn(2+) is required as a cofactor.

Its subcellular location is the cytoplasm. The catalysed reaction is 2 D-sedoheptulose 7-phosphate = D-glycero-alpha-D-manno-heptose 7-phosphate + D-glycero-beta-D-manno-heptose 7-phosphate. The protein operates within carbohydrate biosynthesis; D-glycero-D-manno-heptose 7-phosphate biosynthesis; D-glycero-alpha-D-manno-heptose 7-phosphate and D-glycero-beta-D-manno-heptose 7-phosphate from sedoheptulose 7-phosphate: step 1/1. Catalyzes the isomerization of sedoheptulose 7-phosphate in D-glycero-D-manno-heptose 7-phosphate. This chain is Phosphoheptose isomerase, found in Akkermansia muciniphila (strain ATCC BAA-835 / DSM 22959 / JCM 33894 / BCRC 81048 / CCUG 64013 / CIP 107961 / Muc).